A 273-amino-acid polypeptide reads, in one-letter code: Small ribosomal subunit protein uS2 (273 aa).

Belongs to the universal ribosomal protein uS2 family.

The chain is Small ribosomal subunit protein uS2 from Mycolicibacterium vanbaalenii (strain DSM 7251 / JCM 13017 / BCRC 16820 / KCTC 9966 / NRRL B-24157 / PYR-1) (Mycobacterium vanbaalenii).